The sequence spans 469 residues: GTPase Der (469 aa).

2 EngA-type G domains span residues proline 3–glutamate 166 and leucine 177–asparagine 350. Residues glycine 9–serine 16, aspartate 56–isoleucine 60, asparagine 118–aspartate 121, glycine 183–serine 190, aspartate 230–valine 234, and asparagine 295–aspartate 298 each bind GTP. The KH-like domain maps to leucine 351–glutamate 435.

The protein belongs to the TRAFAC class TrmE-Era-EngA-EngB-Septin-like GTPase superfamily. EngA (Der) GTPase family. As to quaternary structure, associates with the 50S ribosomal subunit.

Functionally, GTPase that plays an essential role in the late steps of ribosome biogenesis. In Acinetobacter baumannii (strain AB0057), this protein is GTPase Der.